The chain runs to 275 residues: Shikimate dehydrogenase (NADP(+)) (275 aa).

Shikimate-binding positions include 16 to 18 (SKS) and T63. The Proton acceptor role is filled by K67. Residues N88 and D104 each contribute to the shikimate site. Residues 129-133 (GAGGA), 153-158 (NRTVAR), and M219 contribute to the NADP(+) site. Y221 is a shikimate binding site. An NADP(+)-binding site is contributed by G243.

Belongs to the shikimate dehydrogenase family. In terms of assembly, homodimer.

The enzyme catalyses shikimate + NADP(+) = 3-dehydroshikimate + NADPH + H(+). It participates in metabolic intermediate biosynthesis; chorismate biosynthesis; chorismate from D-erythrose 4-phosphate and phosphoenolpyruvate: step 4/7. Its function is as follows. Involved in the biosynthesis of the chorismate, which leads to the biosynthesis of aromatic amino acids. Catalyzes the reversible NADPH linked reduction of 3-dehydroshikimate (DHSA) to yield shikimate (SA). The polypeptide is Shikimate dehydrogenase (NADP(+)) (Marinobacter nauticus (strain ATCC 700491 / DSM 11845 / VT8) (Marinobacter aquaeolei)).